A 141-amino-acid polypeptide reads, in one-letter code: Large ribosomal subunit protein uL11 (141 aa).

This sequence belongs to the universal ribosomal protein uL11 family. In terms of assembly, part of the ribosomal stalk of the 50S ribosomal subunit. Interacts with L10 and the large rRNA to form the base of the stalk. L10 forms an elongated spine to which L12 dimers bind in a sequential fashion forming a multimeric L10(L12)X complex. One or more lysine residues are methylated.

Functionally, forms part of the ribosomal stalk which helps the ribosome interact with GTP-bound translation factors. This chain is Large ribosomal subunit protein uL11, found in Syntrophomonas wolfei subsp. wolfei (strain DSM 2245B / Goettingen).